Reading from the N-terminus, the 212-residue chain is Large ribosomal subunit protein uL3 (212 aa).

A disordered region spans residues 119 to 146 (YQGNIKRWGQSRGPETHGSRYHRIPGSM).

Belongs to the universal ribosomal protein uL3 family. In terms of assembly, part of the 50S ribosomal subunit. Forms a cluster with proteins L14 and L19.

Functionally, one of the primary rRNA binding proteins, it binds directly near the 3'-end of the 23S rRNA, where it nucleates assembly of the 50S subunit. In Lactobacillus helveticus (strain DPC 4571), this protein is Large ribosomal subunit protein uL3.